The primary structure comprises 242 residues: MTVTRPRAERGAFPPGTEHYGRSLLGAPLIWFPAPAASRESGLILAGTHGDENSSVVTLSCALRTLTPSLRRHHVVLCVNPDGCQLGLRANANGVDLNRNFPAANWKEGETVYRWNSAAEERDVVLLTGDKPGSEPETQALCQLIHRIQPAWVVSFHDPLACIEDPRHSELGEWLAQAFELPLVTSVGYETPGSFGSWCADLNLHCITAEFPPISSDEASEKYLFAMANLLRWHPKDAIRPS.

One can recognise a Peptidase M14 domain in the interval 1-234 (MTVTRPRAER…FAMANLLRWH (234 aa)). The Zn(2+) site is built by H49, E52, and H157. E210 (proton donor/acceptor) is an active-site residue.

The protein belongs to the peptidase M14 family. As to quaternary structure, homodimer. The cofactor is Zn(2+).

It localises to the cytoplasm. It catalyses the reaction L-alanyl-gamma-D-glutamyl-meso-2,6-diaminopimelate + H2O = L-alanyl-D-glutamate + meso-2,6-diaminopimelate. It functions in the pathway cell wall degradation; peptidoglycan degradation. Involved in muropeptide degradation. Catalyzes the hydrolysis of the gamma-D-glutamyl-diaminopimelic acid (gamma-D-Glu-Dap) amide bond in the murein tripeptide L-alanyl-gamma-D-glutamyl-meso-diaminopimelic acid, leading to the formation of L-Ala-gamma-D-Glu and Dap. The sequence is that of Murein peptide amidase A from Escherichia coli O157:H7.